The following is a 337-amino-acid chain: Probable cytosolic iron-sulfur protein assembly protein CIAO1 homolog (337 aa).

7 WD repeats span residues aspartate 15–methionine 54, serine 65–valine 104, glycine 109–valine 148, proline 154–glutamine 193, cysteine 199–alanine 238, asparagine 253–valine 292, and arginine 301–isoleucine 337.

This sequence belongs to the WD repeat CIA1 family.

Functionally, essential component of the cytosolic iron-sulfur (Fe/S) protein assembly machinery. Required for the maturation of extramitochondrial Fe/S proteins. The polypeptide is Probable cytosolic iron-sulfur protein assembly protein CIAO1 homolog (Caenorhabditis elegans).